The primary structure comprises 327 residues: Mycothiol acetyltransferase (327 aa).

2 consecutive N-acetyltransferase domains span residues 11–159 (EPHG…VTLP) and 162–327 (VQIR…EGTS). Glu-42 is a binding site for 1D-myo-inositol 2-(L-cysteinylamino)-2-deoxy-alpha-D-glucopyranoside. 89 to 91 (LVI) lines the acetyl-CoA pocket. 3 residues coordinate 1D-myo-inositol 2-(L-cysteinylamino)-2-deoxy-alpha-D-glucopyranoside: Glu-189, Lys-228, and Glu-251. Acetyl-CoA contacts are provided by residues 255-257 (LGV) and 262-268 (QGLGLGR). Tyr-289 contacts 1D-myo-inositol 2-(L-cysteinylamino)-2-deoxy-alpha-D-glucopyranoside. Acetyl-CoA is bound at residue 294 to 299 (NAPAIR).

The protein belongs to the acetyltransferase family. MshD subfamily. In terms of assembly, monomer.

It catalyses the reaction 1D-myo-inositol 2-(L-cysteinylamino)-2-deoxy-alpha-D-glucopyranoside + acetyl-CoA = mycothiol + CoA + H(+). Its function is as follows. Catalyzes the transfer of acetyl from acetyl-CoA to desacetylmycothiol (Cys-GlcN-Ins) to form mycothiol. The polypeptide is Mycothiol acetyltransferase (Acidothermus cellulolyticus (strain ATCC 43068 / DSM 8971 / 11B)).